The sequence spans 270 residues: Transcriptional regulator BrlR (270 aa).

M1 serves as a coordination point for 3',3'-c-di-GMP. The HTH merR-type domain maps to 1 to 71 (MLTIGQLARI…LEAIDRLKRD (71 aa)). Residues 4 to 23 (IGQLARIFEISTKTLRHYDA) constitute a DNA-binding region (H-T-H motif). Residues R31, S34, D35, Y40, R67, R70, R86, and Y270 each coordinate 3',3'-c-di-GMP. Residues 120–270 (MHARIVERPA…SQVDLYIPIY (151 aa)) are involved in effector-binding, probably including pyocyanine-binding.

In terms of assembly, monomer. Homodimer; dimer formation enhanced in the presence of the second messenger, cyclic di-GMP (c-di-GMP). Homotetramer; dimer of dimers, arranged in a head-to-tail fashion, which may reduce DNA-binding ability. Conformational changes upon binding c-di-GMP or pyocyanine may facilitate DNA binding.

Transcriptional regulator. Responsive to the second messenger cyclic di-GMP (c-di-GMP) and to the virulence factor pyocyanine, which both enhance gene expression and promoter DNA binding of BrlR. Activates expression of operons encoding the multidrug efflux pumps MexAB-OprM and MexEF-OprN and several ABC transport systems, acting by direct binding to their respective promoters. Also acts as a repressor of the two component regulatory system, PhoPQ. Binds to promoter of its own gene. Contributes to the antimicrobial tolerance exhibited by biofilms, acting, at least in part, by activating expression of multidrug efflux pumps and ABC transporters. This Pseudomonas aeruginosa (strain ATCC 15692 / DSM 22644 / CIP 104116 / JCM 14847 / LMG 12228 / 1C / PRS 101 / PAO1) protein is Transcriptional regulator BrlR.